The primary structure comprises 227 residues: Guanylate kinase (227 aa).

In terms of domain architecture, Guanylate kinase-like spans 21-199 (GNLFMVVAPS…ALAELECIVA (179 aa)). ATP is bound at residue 28-35 (APSGAGKS).

Belongs to the guanylate kinase family.

The protein resides in the cytoplasm. The enzyme catalyses GMP + ATP = GDP + ADP. Functionally, essential for recycling GMP and indirectly, cGMP. This chain is Guanylate kinase, found in Burkholderia orbicola (strain AU 1054).